Consider the following 392-residue polypeptide: Formate-dependent phosphoribosylglycinamide formyltransferase (392 aa).

N(1)-(5-phospho-beta-D-ribosyl)glycinamide is bound by residues 22 to 23 and glutamate 82; that span reads EL. ATP-binding positions include arginine 114, lysine 155, 160 to 165, 195 to 198, and glutamate 203; these read SSGKGQ and EGVV. In terms of domain architecture, ATP-grasp spans 119 to 308; that stretch reads RLAAEELGLP…EFALHVRAFL (190 aa). Glutamate 267 and glutamate 279 together coordinate Mg(2+). N(1)-(5-phospho-beta-D-ribosyl)glycinamide contacts are provided by residues aspartate 286, lysine 355, and 362–363; that span reads RR.

Belongs to the PurK/PurT family. As to quaternary structure, homodimer.

It carries out the reaction N(1)-(5-phospho-beta-D-ribosyl)glycinamide + formate + ATP = N(2)-formyl-N(1)-(5-phospho-beta-D-ribosyl)glycinamide + ADP + phosphate + H(+). It functions in the pathway purine metabolism; IMP biosynthesis via de novo pathway; N(2)-formyl-N(1)-(5-phospho-D-ribosyl)glycinamide from N(1)-(5-phospho-D-ribosyl)glycinamide (formate route): step 1/1. Functionally, involved in the de novo purine biosynthesis. Catalyzes the transfer of formate to 5-phospho-ribosyl-glycinamide (GAR), producing 5-phospho-ribosyl-N-formylglycinamide (FGAR). Formate is provided by PurU via hydrolysis of 10-formyl-tetrahydrofolate. This chain is Formate-dependent phosphoribosylglycinamide formyltransferase, found in Salmonella arizonae (strain ATCC BAA-731 / CDC346-86 / RSK2980).